A 496-amino-acid chain; its full sequence is Cytosol aminopeptidase (496 aa).

Positions 258 and 263 each coordinate Mn(2+). Lys-270 is an active-site residue. The Mn(2+) site is built by Asp-281, Asp-340, and Glu-342. Arg-344 is a catalytic residue.

This sequence belongs to the peptidase M17 family. Requires Mn(2+) as cofactor.

The protein localises to the cytoplasm. The enzyme catalyses Release of an N-terminal amino acid, Xaa-|-Yaa-, in which Xaa is preferably Leu, but may be other amino acids including Pro although not Arg or Lys, and Yaa may be Pro. Amino acid amides and methyl esters are also readily hydrolyzed, but rates on arylamides are exceedingly low.. The catalysed reaction is Release of an N-terminal amino acid, preferentially leucine, but not glutamic or aspartic acids.. In terms of biological role, presumably involved in the processing and regular turnover of intracellular proteins. Catalyzes the removal of unsubstituted N-terminal amino acids from various peptides. The sequence is that of Cytosol aminopeptidase (pepA) from Helicobacter pylori (strain J99 / ATCC 700824) (Campylobacter pylori J99).